The following is a 427-amino-acid chain: MNQGTIIKVVGPVVDVEFPSGLLPNINNALHISSDEQPEDKKTGHDFKVVLEVAEHLGGNIVRAIAMSSTDGLMRGMVVTDQESPITVPVGDATLGRLMNVVGDPIDEAGEVPSETRWPIHRSAPTYVQQNPSKEILETGIKVVDLLCPYVKGGKIGLFGGAGVGKTVLIQELIRNIAYEHGGYSVFAGVGERTREGKDLLVEMRESGVIDKTSLVFGQMNEPPGARMRIALTGLTVAEYFRDEQNQDVLLFIDNIFRFTQAGSEVSALLGRMPSAVGYQPTLATEMGTMQERITSTDKGSITSVQAVYVPADDLTDPAPATTFAHLDATTVLERSISEKGIYPAVDPLASTSRILDPRIVGEEHYEIARDVQEVLQEYRELQDIISILGMDELSDEEKLTVARARRIERFLSQSFFVAEQFTGNPG.

160-167 (GGAGVGKT) contacts ATP.

It belongs to the ATPase alpha/beta chains family. As to quaternary structure, F-type ATPases have 2 components, CF(1) - the catalytic core - and CF(0) - the membrane proton channel. CF(1) has five subunits: alpha(3), beta(3), gamma(1), delta(1), epsilon(1). CF(0) has three main subunits: a(1), b(2) and c(9-12). The alpha and beta chains form an alternating ring which encloses part of the gamma chain. CF(1) is attached to CF(0) by a central stalk formed by the gamma and epsilon chains, while a peripheral stalk is formed by the delta and b chains.

The protein resides in the cell membrane. The catalysed reaction is ATP + H2O + 4 H(+)(in) = ADP + phosphate + 5 H(+)(out). In terms of biological role, produces ATP from ADP in the presence of a proton gradient across the membrane. The catalytic sites are hosted primarily by the beta subunits. The protein is ATP synthase subunit beta of Peptococcus niger.